Here is a 300-residue protein sequence, read N- to C-terminus: MDQQSTRTDITVNVDGFWMLQALLDIRHVAPELRCRPYVSTDSNDWLNEHPGMAVMREQGIVVGDTVNEQVAARMRVLAAPDLEVVALLSRGKLLYGVVDNEDQPPGSRDIPDNEFRVVLARRGQHWVSAVRVGNDITVDDVSVSDSASIAALVIDGLESIHHADPAAINAVNVPLEEMLEATKSWQESGFNVFSGGDLRRMGISASTVAALGQALSDPAAEVAVYARQYRDDAKGPSASVLSLKDGSGGRIALYQQARTAGSGEAWLAICPATPQLVQVGVKTVLDTLPYGEWKTHSRV.

Belongs to the EspG family. As to quaternary structure, interacts specifically with ESX-5-dependent PE/PPE proteins. Binds PPE33 and PPE18. Does not interact with EsxN. Monomer in solution.

Its subcellular location is the cytoplasm. Its function is as follows. Specific chaperone for cognate PE/PPE proteins. Plays an important role in preventing aggregation of PE/PPE dimers. Required for LipY and PE31/PPE18 secretion. This chain is ESX-5 secretion-associated protein EspG5, found in Mycobacterium marinum (strain ATCC BAA-535 / M).